The sequence spans 610 residues: Elongation factor 4 (610 aa).

The region spanning 11 to 193 (KYIRNFSIVA…QIVTKIPAPA (183 aa)) is the tr-type G domain. GTP-binding positions include 23–28 (DHGKST) and 140–143 (NKID).

This sequence belongs to the TRAFAC class translation factor GTPase superfamily. Classic translation factor GTPase family. LepA subfamily.

It localises to the cell membrane. It carries out the reaction GTP + H2O = GDP + phosphate + H(+). Functionally, required for accurate and efficient protein synthesis under certain stress conditions. May act as a fidelity factor of the translation reaction, by catalyzing a one-codon backward translocation of tRNAs on improperly translocated ribosomes. Back-translocation proceeds from a post-translocation (POST) complex to a pre-translocation (PRE) complex, thus giving elongation factor G a second chance to translocate the tRNAs correctly. Binds to ribosomes in a GTP-dependent manner. The protein is Elongation factor 4 of Levilactobacillus brevis (strain ATCC 367 / BCRC 12310 / CIP 105137 / JCM 1170 / LMG 11437 / NCIMB 947 / NCTC 947) (Lactobacillus brevis).